We begin with the raw amino-acid sequence, 450 residues long: 3-phosphoshikimate 1-carboxyvinyltransferase (450 aa).

A disordered region spans residues 1–26; sequence MSGHGTPIPMTSRRASPLKGEAHVPG. 3-phosphoshikimate-binding residues include Lys-28, Ser-29, and Arg-33. Residue Lys-28 participates in phosphoenolpyruvate binding. Residues Gly-101 and Arg-129 each coordinate phosphoenolpyruvate. Positions 174, 176, 327, and 354 each coordinate 3-phosphoshikimate. Gln-176 contributes to the phosphoenolpyruvate binding site. Residue Asp-327 is the Proton acceptor of the active site. Arg-358 and Arg-403 together coordinate phosphoenolpyruvate.

The protein belongs to the EPSP synthase family. As to quaternary structure, monomer.

It localises to the cytoplasm. The enzyme catalyses 3-phosphoshikimate + phosphoenolpyruvate = 5-O-(1-carboxyvinyl)-3-phosphoshikimate + phosphate. It participates in metabolic intermediate biosynthesis; chorismate biosynthesis; chorismate from D-erythrose 4-phosphate and phosphoenolpyruvate: step 6/7. In terms of biological role, catalyzes the transfer of the enolpyruvyl moiety of phosphoenolpyruvate (PEP) to the 5-hydroxyl of shikimate-3-phosphate (S3P) to produce enolpyruvyl shikimate-3-phosphate and inorganic phosphate. The polypeptide is 3-phosphoshikimate 1-carboxyvinyltransferase (Ruegeria sp. (strain TM1040) (Silicibacter sp.)).